The primary structure comprises 412 residues: Putative oxidoreductase bli-4, mitochondrial (412 aa).

The N-terminal 55 residues, 1-55 (MSTKLCQRIARTATLSPTSLVPRSSRLIPIVSSAAVRPSSAIPTRRPFSTTESRY), are a transit peptide targeting the mitochondrion. Positions 108, 120, 186, 269, 273, 308, 310, and 312 each coordinate NADP(+). Residue Y269 is the Proton donor of the active site. Residue K273 is the Lowers pKa of active site Tyr of the active site.

It belongs to the short-chain dehydrogenases/reductases (SDR) family.

Its subcellular location is the mitochondrion. Functionally, may play a role as an NAD-dependent dehydrogenase in the mitochondria. The protein is Putative oxidoreductase bli-4, mitochondrial (bli-4) of Neurospora crassa (strain ATCC 24698 / 74-OR23-1A / CBS 708.71 / DSM 1257 / FGSC 987).